We begin with the raw amino-acid sequence, 113 residues long: Replication initiation control protein YabA (113 aa).

Residues His86, Cys88, Cys102, and Cys105 each contribute to the Zn(2+) site.

The protein belongs to the YabA family. As to quaternary structure, homotetramer. Interacts with both DnaA and DnaN, acting as a bridge between these two proteins. It depends on Zn(2+) as a cofactor.

The protein resides in the cytoplasm. It is found in the nucleoid. Its function is as follows. Involved in control of chromosome replication initiation. Inhibits the cooperative binding of DnaA to the oriC region, thus negatively regulating initiation of chromosome replication. Inhibits the ability of DnaA-ATP to form a helix on DNA; does not disassemble preformed DnaA-DNA helices. Decreases the residence time of DnaA on the chromosome at its binding sites (oriC, replication forks and promoter-binding sites). Tethers DnaA to the replication machinery via the DNA polymerase beta sliding clamp subunit (dnaN). Associates with oriC and other DnaA targets on the chromosome in a DnaA-dependent manner. The polypeptide is Replication initiation control protein YabA (Pediococcus pentosaceus (strain ATCC 25745 / CCUG 21536 / LMG 10740 / 183-1w)).